The following is a 396-amino-acid chain: 1-deoxy-D-xylulose 5-phosphate reductoisomerase (396 aa).

The NADPH site is built by threonine 10, glycine 11, serine 12, isoleucine 13, glycine 36, lysine 37, asparagine 38, and asparagine 124. Lysine 125 is a binding site for 1-deoxy-D-xylulose 5-phosphate. NADPH is bound at residue glutamate 126. A Mn(2+)-binding site is contributed by aspartate 150. Positions 151, 152, 186, and 209 each coordinate 1-deoxy-D-xylulose 5-phosphate. Glutamate 152 provides a ligand contact to Mn(2+). Glycine 215 serves as a coordination point for NADPH. 1-deoxy-D-xylulose 5-phosphate-binding residues include serine 222, asparagine 227, lysine 228, and glutamate 231. Residue glutamate 231 coordinates Mn(2+).

It belongs to the DXR family. The cofactor is Mg(2+). Mn(2+) is required as a cofactor.

It catalyses the reaction 2-C-methyl-D-erythritol 4-phosphate + NADP(+) = 1-deoxy-D-xylulose 5-phosphate + NADPH + H(+). Its pathway is isoprenoid biosynthesis; isopentenyl diphosphate biosynthesis via DXP pathway; isopentenyl diphosphate from 1-deoxy-D-xylulose 5-phosphate: step 1/6. In terms of biological role, catalyzes the NADPH-dependent rearrangement and reduction of 1-deoxy-D-xylulose-5-phosphate (DXP) to 2-C-methyl-D-erythritol 4-phosphate (MEP). The protein is 1-deoxy-D-xylulose 5-phosphate reductoisomerase of Haemophilus ducreyi (strain 35000HP / ATCC 700724).